The chain runs to 243 residues: Probable glycerol uptake facilitator protein (243 aa).

The next 2 helical transmembrane spans lie at 7–27 and 44–64; these read ILLG…GVCA and LLIA…SIQV. Positions 72-74 match the NPA 1 motif; it reads NPA. Transmembrane regions (helical) follow at residues 88–108, 143–163, and 166–186; these read IGLL…AQII, ISYE…GDYH, and TGVF…GCAI. The NPA 2 motif lies at 187–189; the sequence is NPA. A helical transmembrane segment spans residues 221–241; it reads LVPLLAPIAAGLIMGGFSLLI.

It belongs to the MIP/aquaporin (TC 1.A.8) family.

It is found in the cell membrane. The catalysed reaction is glycerol(in) = glycerol(out). Its function is as follows. Mediates glycerol diffusion across the cytoplasmic membrane via a pore-type mechanism. This chain is Probable glycerol uptake facilitator protein (glpF), found in Mycoplasmoides gallisepticum (strain R(low / passage 15 / clone 2)) (Mycoplasma gallisepticum).